The primary structure comprises 534 residues: Arginine--tRNA ligase (534 aa).

The 'HIGH' region motif lies at 120–130 (ANPTGFLHLGH).

The protein belongs to the class-I aminoacyl-tRNA synthetase family. In terms of assembly, monomer.

It is found in the cytoplasm. It carries out the reaction tRNA(Arg) + L-arginine + ATP = L-arginyl-tRNA(Arg) + AMP + diphosphate. This chain is Arginine--tRNA ligase, found in Mesomycoplasma hyopneumoniae (strain 232) (Mycoplasma hyopneumoniae).